Here is a 50-residue protein sequence, read N- to C-terminus: Monellin chain B (50 aa).

As to quaternary structure, heterodimer of an A chain and a B chain.

Taste-modifying protein; intensely sweet-tasting protein. This chain is Monellin chain B, found in Dioscoreophyllum cumminsii (Serendipity berry).